The sequence spans 875 residues: MTLARFVLALVLGALPEVVXFDSVLNDSLHHRPRHSPPTGPHYPYYLPTQQRPPRTRPPPPLPRFPRPPRALPAQRPHALQAGHTPRPHPWGCPAGEPWVSVTDFGAPCLRWAEVPPFLERSPPANWAQLRGQRHNFCRSPDGAGRPWCFYGDARGKVDWGYCDCRHGSIRLRGGKNEFEGTVEVYASGVWGTVCSSHWDDSDASVICHQLQLGGKGIAKQTPFSGLGLIPIYWSNVRCRGDEENILLCEKDIWQGGVCPQKMAAAVTCSFSHGPTFPIIRLVGGSSVHEGRVELYHAGQWGTVCDDQWDDADAEVICRQLGLSGIAKAWHQAYFGEGSGPVMLDEVRCTGNELSIEQCPKSSWGEHNCGHKEDAGVSCTPLTDGVIRLAGGKGSHEGRLEVYYRGQWGTVCDDGWTELNTYVVCRQLGFKYGKQASANHFEESTGPIWLDDVSCSGKETRFLQCSRRQWGRHDCSHREDVSIACYPGGEGHRLSLGFPVRLMDGENKKEGRVEVFINGQWGTICDDGWTDKDAAVICRQLGYKGPARARTMAYFGEGKGPIHVDNVKCTGNERSLADCIKQDIGRHNCRHSEDAGVICDYFGKKASGNSNKESLSSVCGLRLLHRRQKRIIGGKNSLRGGWPWQVSLRLKSSHGDGRLLCGATLLSSCWVLTAAHCFKRYGNSTRNYAVRVGDYHTLVPEEFEEEIGVQQIVIHREYRPDSSDYDIALVRLQGPEEQCARFSSHVLPACLPLWRERPQKTASNCYITGWGDTGRAYSRTLQQAAIPLLPKRFCEERYKGRFTGRMLCAGNLHEHKRVDSCQGDSGGPLMCERPGESWVVYGVTSWGHGCGVKDSPGVYTKVSAFVPWIKSVTKL.

The N-terminal stretch at 1–20 (MTLARFVLALVLGALPEVVX) is a signal peptide. A glycan (N-linked (GlcNAc...) asparagine) is linked at N26. Positions 31–88 (HRPRHSPPTGPHYPYYLPTQQRPPRTRPPPPLPRFPRPPRALPAQRPHALQAGHTPRP) are disordered. The span at 56 to 71 (TRPPPPLPRFPRPPRA) shows a compositional bias: pro residues. One can recognise a Kringle domain in the interval 93–165 (CPAGEPWVSV…GKVDWGYCDC (73 aa)). 20 cysteine pairs are disulfide-bonded: C93-C165, C109-C149, C138-C163, C195-C259, C208-C269, C239-C249, C305-C369, C318-C379, C349-C359, C412-C475, C425-C485, C455-C465, C525-C589, C538-C599, C569-C579, C619-C750, C661-C677, C765-C831, C794-C808, and C821-C850. SRCR domains are found at residues 170-271 (IRLR…TCSF), 280-381 (IRLV…SCTP), 387-487 (IRLA…ACYP), and 500-601 (VRLM…ICDY). The segment at 619–630 (CGLRLLHRRQKR) is zymogen activation region. One can recognise a Peptidase S1 domain in the interval 631–874 (IIGGKNSLRG…FVPWIKSVTK (244 aa)). H676 serves as the catalytic Charge relay system. N683 is a glycosylation site (N-linked (GlcNAc...) asparagine). The active-site Charge relay system is the D726. S825 (charge relay system) is an active-site residue.

The protein belongs to the peptidase S1 family.

The protein localises to the secreted. Its function is as follows. Plays a role in neuronal plasticity and the proteolytic action may subserve structural reorganizations associated with learning and memory operations. The sequence is that of Neurotrypsin (PRSS12) from Nomascus leucogenys (Northern white-cheeked gibbon).